The sequence spans 307 residues: uncharacterized protein (307 aa).

Residues 1-25 (MKFQKRNIQLVLILLLILNNCFINS) form the signal peptide. Positions 60–90 (ENNNKNNNNNNNNNNNNNNNNKNSKVKNDDS) are disordered. Low complexity predominate over residues 63–82 (NKNNNNNNNNNNNNNNNNKN). N-linked (GlcNAc...) asparagine glycosylation is found at Asn-124 and Asn-173. 2 consecutive transmembrane segments (helical) span residues 244–264 (IIFA…YYLA) and 275–295 (IIGV…TIVI).

It is found in the membrane. This is an uncharacterized protein from Dictyostelium discoideum (Social amoeba).